We begin with the raw amino-acid sequence, 447 residues long: Acidic leucine-rich nuclear phosphoprotein 32-related protein (447 aa).

LRR repeat units follow at residues 49-70 (NLQHLSVANIGVSSLEQFPRLG), 71-90 (NLQKLILSDNRITVGLEFLV), and 96-117 (SFCDLDLSNNRIQFVEDLAPLA). Residues 129–167 (CPVTRLKDYRSRVFGLIKTLKYLDKTDAEGNERPESDDE) enclose the LRRCT domain. A disordered region spans residues 155–447 (DAEGNERPES…EDDDDDDEER (293 aa)). Acidic residues-rich tracts occupy residues 163 to 194 (ESDDEDDEEDEEDEEEEEEGDEEDPGSGEIDG) and 215 to 231 (VDVDEDEESDAEDDESE). Residues 232-242 (QATGVNGTSYR) show a composition bias toward polar residues. 5 stretches are compositionally biased toward acidic residues: residues 256–277 (VREDDGDDSESGEEEVGEDNDV), 284–309 (EDSENEEDGVDDEEDDEEDEEEEEVD), 336–374 (GDDDEDGDGETGEDDQGVEDDGEFADEDDDVEEEDEESG), 397–415 (PINEDNDPDEEEEVEDDLP), and 433–447 (DDDDGEDDDDDDEER).

This sequence belongs to the ANP32 family.

This chain is Acidic leucine-rich nuclear phosphoprotein 32-related protein, found in Arabidopsis thaliana (Mouse-ear cress).